A 154-amino-acid chain; its full sequence is 6,7-dimethyl-8-ribityllumazine synthase (154 aa).

Residues phenylalanine 22, 56 to 58 (AFE), and 80 to 82 (TVI) each bind 5-amino-6-(D-ribitylamino)uracil. 85-86 (AT) is a (2S)-2-hydroxy-3-oxobutyl phosphate binding site. Histidine 88 serves as the catalytic Proton donor. Residue phenylalanine 113 coordinates 5-amino-6-(D-ribitylamino)uracil. Residue arginine 127 participates in (2S)-2-hydroxy-3-oxobutyl phosphate binding.

Belongs to the DMRL synthase family. As to quaternary structure, forms an icosahedral capsid composed of 60 subunits, arranged as a dodecamer of pentamers.

The catalysed reaction is (2S)-2-hydroxy-3-oxobutyl phosphate + 5-amino-6-(D-ribitylamino)uracil = 6,7-dimethyl-8-(1-D-ribityl)lumazine + phosphate + 2 H2O + H(+). It participates in cofactor biosynthesis; riboflavin biosynthesis; riboflavin from 2-hydroxy-3-oxobutyl phosphate and 5-amino-6-(D-ribitylamino)uracil: step 1/2. Its function is as follows. Catalyzes the formation of 6,7-dimethyl-8-ribityllumazine by condensation of 5-amino-6-(D-ribitylamino)uracil with 3,4-dihydroxy-2-butanone 4-phosphate. This is the penultimate step in the biosynthesis of riboflavin. The sequence is that of 6,7-dimethyl-8-ribityllumazine synthase from Bacillus amyloliquefaciens (Bacillus velezensis).